A 211-amino-acid chain; its full sequence is Arginine exporter protein ArgO (211 aa).

At 1 to 38 (MFSYYFQGLALGAAMILPLGPQNAFVMNQGIRRQYHIM) the chain is on the cytoplasmic side. A helical transmembrane segment spans residues 39-58 (IALLCAISDLVLICAGIFGG). Residues 59 to 63 (SALLM) lie on the Periplasmic side of the membrane. Residues 64-91 (QSPWLLALVTWGGVAFLLWYGFGAFKTA) form a helical membrane-spanning segment. At 92–102 (MSSNIELASAE) the chain is on the cytoplasmic side. Residues 103 to 130 (VMKQGRWKIIATMLAVTWLNPHVYLDTF) form a helical membrane-spanning segment. Topologically, residues 131-140 (VVLGSLGGQL) are periplasmic. Residues 141 to 170 (DVEPKRWFALGTISASFLWFFGLALLAAWL) form a helical membrane-spanning segment. Residues 171–173 (APR) lie on the Cytoplasmic side of the membrane. A helical membrane pass occupies residues 174–200 (LRTAKAQRIINLVVGCVMWFIALQLAR). Residues 201–211 (DGIAHAQALFS) lie on the Periplasmic side of the membrane.

It belongs to the LysE/ArgO transporter (TC 2.A.75) family. As to quaternary structure, monomer.

The protein resides in the cell inner membrane. The catalysed reaction is L-arginine(in) = L-arginine(out). Functionally, involved in the export of arginine. Important to control the intracellular level of arginine and the correct balance between arginine and lysine. May also be involved in the export of canavanine (a plant-derived antimetabolite). In Escherichia coli (strain K12), this protein is Arginine exporter protein ArgO.